A 276-amino-acid chain; its full sequence is Elongation factor Ts (276 aa).

Positions 80 to 83 are involved in Mg(2+) ion dislocation from EF-Tu; it reads TDFV.

This sequence belongs to the EF-Ts family.

It is found in the cytoplasm. Associates with the EF-Tu.GDP complex and induces the exchange of GDP to GTP. It remains bound to the aminoacyl-tRNA.EF-Tu.GTP complex up to the GTP hydrolysis stage on the ribosome. This is Elongation factor Ts from Acidothermus cellulolyticus (strain ATCC 43068 / DSM 8971 / 11B).